We begin with the raw amino-acid sequence, 239 residues long: Enolase-phosphatase E1 (239 aa).

The Mg(2+) site is built by Asp-13 and Glu-15. Residues 133 to 134 and Lys-170 each bind substrate; that span reads SS. A Mg(2+)-binding site is contributed by Asp-196.

Belongs to the HAD-like hydrolase superfamily. MasA/MtnC family. In terms of assembly, monomer. It depends on Mg(2+) as a cofactor.

It localises to the cytoplasm. The protein resides in the nucleus. It catalyses the reaction 5-methylsulfanyl-2,3-dioxopentyl phosphate + H2O = 1,2-dihydroxy-5-(methylsulfanyl)pent-1-en-3-one + phosphate. Its pathway is amino-acid biosynthesis; L-methionine biosynthesis via salvage pathway; L-methionine from S-methyl-5-thio-alpha-D-ribose 1-phosphate: step 3/6. It functions in the pathway amino-acid biosynthesis; L-methionine biosynthesis via salvage pathway; L-methionine from S-methyl-5-thio-alpha-D-ribose 1-phosphate: step 4/6. Its function is as follows. Bifunctional enzyme that catalyzes the enolization of 2,3-diketo-5-methylthiopentyl-1-phosphate (DK-MTP-1-P) into the intermediate 2-hydroxy-3-keto-5-methylthiopentenyl-1-phosphate (HK-MTPenyl-1-P), which is then dephosphorylated to form the acireductone 1,2-dihydroxy-3-keto-5-methylthiopentene (DHK-MTPene). The chain is Enolase-phosphatase E1 from Chaetomium globosum (strain ATCC 6205 / CBS 148.51 / DSM 1962 / NBRC 6347 / NRRL 1970) (Soil fungus).